Here is a 53-residue protein sequence, read N- to C-terminus: uncharacterized protein (53 aa).

It localises to the mitochondrion. This is an uncharacterized protein from Saccharomyces cerevisiae (strain ATCC 204508 / S288c) (Baker's yeast).